We begin with the raw amino-acid sequence, 316 residues long: Ribose-phosphate pyrophosphokinase (316 aa).

Residues 37-39 and 96-97 contribute to the ATP site; these read DGE and RQ. The Mg(2+) site is built by histidine 130 and aspartate 171. The active site involves lysine 194. Residues arginine 196 and aspartate 221 each coordinate D-ribose 5-phosphate.

Belongs to the ribose-phosphate pyrophosphokinase family. Class I subfamily. Homohexamer. The cofactor is Mg(2+).

Its subcellular location is the cytoplasm. It catalyses the reaction D-ribose 5-phosphate + ATP = 5-phospho-alpha-D-ribose 1-diphosphate + AMP + H(+). The protein operates within metabolic intermediate biosynthesis; 5-phospho-alpha-D-ribose 1-diphosphate biosynthesis; 5-phospho-alpha-D-ribose 1-diphosphate from D-ribose 5-phosphate (route I): step 1/1. Its function is as follows. Involved in the biosynthesis of the central metabolite phospho-alpha-D-ribosyl-1-pyrophosphate (PRPP) via the transfer of pyrophosphoryl group from ATP to 1-hydroxyl of ribose-5-phosphate (Rib-5-P). The protein is Ribose-phosphate pyrophosphokinase of Rhodopirellula baltica (strain DSM 10527 / NCIMB 13988 / SH1).